The chain runs to 100 residues: Small ribosomal subunit protein uS14c (100 aa).

The protein belongs to the universal ribosomal protein uS14 family. In terms of assembly, part of the 30S ribosomal subunit.

Its subcellular location is the plastid. It localises to the chloroplast. In terms of biological role, binds 16S rRNA, required for the assembly of 30S particles. This is Small ribosomal subunit protein uS14c from Morus indica (Mulberry).